The chain runs to 98 residues: NADH-ubiquinone oxidoreductase chain 4L (98 aa).

3 helical membrane-spanning segments follow: residues 1–21, 29–49, and 61–81; these read MPLI…GMLI, SLLC…LMAL, and VVLL…LVSI.

Belongs to the complex I subunit 4L family. In terms of assembly, core subunit of respiratory chain NADH dehydrogenase (Complex I) which is composed of 45 different subunits.

The protein localises to the mitochondrion inner membrane. The enzyme catalyses a ubiquinone + NADH + 5 H(+)(in) = a ubiquinol + NAD(+) + 4 H(+)(out). Its function is as follows. Core subunit of the mitochondrial membrane respiratory chain NADH dehydrogenase (Complex I) which catalyzes electron transfer from NADH through the respiratory chain, using ubiquinone as an electron acceptor. Part of the enzyme membrane arm which is embedded in the lipid bilayer and involved in proton translocation. This chain is NADH-ubiquinone oxidoreductase chain 4L (MT-ND4L), found in Hylobates lar (Lar gibbon).